A 113-amino-acid polypeptide reads, in one-letter code: U10-theraphotoxin-Hs2a (113 aa).

Positions 1 to 21 (MNTVRVTFLLVFVLAVSLGQA) are cleaved as a signal peptide. Positions 22-67 (DEDGNRMEKRQKKTEAENLLLPKLEELDAKLWEEDSVESRNSRQKR) are excised as a propeptide. 3 disulfide bridges follow: Cys-68–Cys-86, Cys-75–Cys-91, and Cys-85–Cys-106.

The protein belongs to the neurotoxin 14 (magi-1) family. 02 (HWTX-XVIc) subfamily. Expressed by the venom gland.

Its subcellular location is the secreted. In terms of biological role, probable ion channel inhibitor. The sequence is that of U10-theraphotoxin-Hs2a from Cyriopagopus schmidti (Chinese bird spider).